Here is a 174-residue protein sequence, read N- to C-terminus: Co-chaperone protein HscB homolog (174 aa).

Residues 2-74 (NYFELFKFPP…IRRAEHMLSL (73 aa)) form the J domain.

Belongs to the HscB family. Interacts with HscA and stimulates its ATPase activity.

Co-chaperone involved in the maturation of iron-sulfur cluster-containing proteins. Seems to help targeting proteins to be folded toward HscA. The polypeptide is Co-chaperone protein HscB homolog (Shewanella baltica (strain OS195)).